The chain runs to 860 residues: Leucine--tRNA ligase (860 aa).

The 'HIGH' region motif lies at 42–52 (PYPSGRLHMGH). The short motif at 619–623 (KMSKS) is the 'KMSKS' region element. An ATP-binding site is contributed by K622.

This sequence belongs to the class-I aminoacyl-tRNA synthetase family.

It localises to the cytoplasm. It catalyses the reaction tRNA(Leu) + L-leucine + ATP = L-leucyl-tRNA(Leu) + AMP + diphosphate. The polypeptide is Leucine--tRNA ligase (Yersinia pseudotuberculosis serotype O:3 (strain YPIII)).